A 235-amino-acid chain; its full sequence is Ubiquinone/menaquinone biosynthesis C-methyltransferase UbiE (235 aa).

Residues T60 and D81 each contribute to the S-adenosyl-L-methionine site.

This sequence belongs to the class I-like SAM-binding methyltransferase superfamily. MenG/UbiE family.

The catalysed reaction is a 2-demethylmenaquinol + S-adenosyl-L-methionine = a menaquinol + S-adenosyl-L-homocysteine + H(+). It catalyses the reaction a 2-methoxy-6-(all-trans-polyprenyl)benzene-1,4-diol + S-adenosyl-L-methionine = a 5-methoxy-2-methyl-3-(all-trans-polyprenyl)benzene-1,4-diol + S-adenosyl-L-homocysteine + H(+). The protein operates within quinol/quinone metabolism; menaquinone biosynthesis; menaquinol from 1,4-dihydroxy-2-naphthoate: step 2/2. It participates in cofactor biosynthesis; ubiquinone biosynthesis. Methyltransferase required for the conversion of demethylmenaquinol (DMKH2) to menaquinol (MKH2) and the conversion of 2-polyprenyl-6-methoxy-1,4-benzoquinol (DDMQH2) to 2-polyprenyl-3-methyl-6-methoxy-1,4-benzoquinol (DMQH2). This chain is Ubiquinone/menaquinone biosynthesis C-methyltransferase UbiE, found in Geotalea uraniireducens (strain Rf4) (Geobacter uraniireducens).